The chain runs to 416 residues: Glutamyl-tRNA reductase (416 aa).

Substrate is bound by residues 49–52, Ser-105, 110–112, and Gln-116; these read TCNR and EPQ. Catalysis depends on Cys-50, which acts as the Nucleophile. Residue 185–190 participates in NADP(+) binding; that stretch reads GAGETI.

It belongs to the glutamyl-tRNA reductase family. As to quaternary structure, homodimer.

It carries out the reaction (S)-4-amino-5-oxopentanoate + tRNA(Glu) + NADP(+) = L-glutamyl-tRNA(Glu) + NADPH + H(+). The protein operates within porphyrin-containing compound metabolism; protoporphyrin-IX biosynthesis; 5-aminolevulinate from L-glutamyl-tRNA(Glu): step 1/2. Functionally, catalyzes the NADPH-dependent reduction of glutamyl-tRNA(Glu) to glutamate 1-semialdehyde (GSA). This Shewanella sediminis (strain HAW-EB3) protein is Glutamyl-tRNA reductase.